Consider the following 112-residue polypeptide: MSVLLIAKTLGLFFITAIAEIIGCYLPYLWLKKDGSAWLLIPAAISLAVFAWLLTLHPAESGRVYAAYGGVYVVTALLWLKAVEGASLSTYDAVGAAFTLTGMAIIAVGWNH.

The next 4 helical transmembrane spans lie at 10–30 (LGLFFITAIAEIIGCYLPYLW), 36–56 (SAWLLIPAAISLAVFAWLLTL), 64–84 (VYAAYGGVYVVTALLWLKAVE), and 90–110 (TYDAVGAAFTLTGMAIIAVGW).

Belongs to the UPF0060 family.

The protein resides in the cell inner membrane. This chain is UPF0060 membrane protein IL2332, found in Idiomarina loihiensis (strain ATCC BAA-735 / DSM 15497 / L2-TR).